Here is a 412-residue protein sequence, read N- to C-terminus: FAD-dependent monooxygenase nscC (412 aa).

The signal sequence occupies residues methionine 1 to serine 21. Residues glutamate 35 and alanine 46 each coordinate FAD. N-linked (GlcNAc...) asparagine glycosylation is present at asparagine 92. Arginine 119 contributes to the FAD binding site. Residues asparagine 170 and asparagine 231 are each glycosylated (N-linked (GlcNAc...) asparagine). Positions 326 and 339 each coordinate FAD.

It belongs to the paxM FAD-dependent monooxygenase family. Requires FAD as cofactor.

It functions in the pathway secondary metabolite biosynthesis. Functionally, FAD-dependent monooxygenase; part of the gene cluster that mediates the biosynthesis of neosartoricin B, a prenylated anthracenone that probably exhibits T-cell antiproliferative activity, suggestive of a physiological role as an immunosuppressive agent. The non-reducing polyketide synthase nscA probably synthesizes and cyclizes the decaketide backbone. The hydrolase nscB then mediates the product release through hydrolysis followed by spontaneous decarboxylation. The prenyltransferase nscD catalyzes the addition of the dimethylallyl group to the aromatic C5. The FAD-dependent monooxygenase nscC is then responsible for the stereospecific hydroxylation at C2. Neosartoricin B can be converted into two additional compounds neosartoricins C and D. Neosartoricin C is a spirocyclic compound that is cyclized through the attack of C3 hydroxyl on C14, followed by dehydration. On the other hand, neosartoricin D is a further cyclized compound in which attack of C2 on C14 in neosartoricin C results in the formation of the acetal-containing dioxabicyclo-octanone ring. Both of these compounds are novel and possibly represent related metabolites of the gene cluster. This Trichophyton tonsurans (strain CBS 112818) (Scalp ringworm fungus) protein is FAD-dependent monooxygenase nscC.